Consider the following 285-residue polypeptide: 4-diphosphocytidyl-2-C-methyl-D-erythritol kinase (285 aa).

The active site involves Lys-10. 93–103 (PIGGGLGGGSS) is an ATP binding site. The active site involves Asp-135.

Belongs to the GHMP kinase family. IspE subfamily.

The catalysed reaction is 4-CDP-2-C-methyl-D-erythritol + ATP = 4-CDP-2-C-methyl-D-erythritol 2-phosphate + ADP + H(+). Its pathway is isoprenoid biosynthesis; isopentenyl diphosphate biosynthesis via DXP pathway; isopentenyl diphosphate from 1-deoxy-D-xylulose 5-phosphate: step 3/6. In terms of biological role, catalyzes the phosphorylation of the position 2 hydroxy group of 4-diphosphocytidyl-2C-methyl-D-erythritol. The protein is 4-diphosphocytidyl-2-C-methyl-D-erythritol kinase of Vesicomyosocius okutanii subsp. Calyptogena okutanii (strain HA).